Reading from the N-terminus, the 427-residue chain is Tryptophan synthase beta chain (427 aa).

N6-(pyridoxal phosphate)lysine is present on lysine 100.

The protein belongs to the TrpB family. As to quaternary structure, tetramer of two alpha and two beta chains. Requires pyridoxal 5'-phosphate as cofactor.

It catalyses the reaction (1S,2R)-1-C-(indol-3-yl)glycerol 3-phosphate + L-serine = D-glyceraldehyde 3-phosphate + L-tryptophan + H2O. It participates in amino-acid biosynthesis; L-tryptophan biosynthesis; L-tryptophan from chorismate: step 5/5. The beta subunit is responsible for the synthesis of L-tryptophan from indole and L-serine. This is Tryptophan synthase beta chain (trpB) from Streptomyces coelicolor (strain ATCC BAA-471 / A3(2) / M145).